The primary structure comprises 316 residues: Ribosomal RNA small subunit methyltransferase H (316 aa).

S-adenosyl-L-methionine is bound by residues 36–38 (GGH), Asp56, Phe83, Asp104, and Gln111.

Belongs to the methyltransferase superfamily. RsmH family.

Its subcellular location is the cytoplasm. It carries out the reaction cytidine(1402) in 16S rRNA + S-adenosyl-L-methionine = N(4)-methylcytidine(1402) in 16S rRNA + S-adenosyl-L-homocysteine + H(+). Its function is as follows. Specifically methylates the N4 position of cytidine in position 1402 (C1402) of 16S rRNA. The sequence is that of Ribosomal RNA small subunit methyltransferase H from Protochlamydia amoebophila (strain UWE25).